The primary structure comprises 267 residues: Glucosamine-6-phosphate deaminase (267 aa).

Asp-72 serves as the catalytic Proton acceptor; for enolization step. The For ring-opening step role is filled by Asp-141. His-143 (proton acceptor; for ring-opening step) is an active-site residue. Catalysis depends on Glu-148, which acts as the For ring-opening step.

It belongs to the glucosamine/galactosamine-6-phosphate isomerase family. NagB subfamily. In terms of assembly, homohexamer.

The catalysed reaction is alpha-D-glucosamine 6-phosphate + H2O = beta-D-fructose 6-phosphate + NH4(+). It participates in amino-sugar metabolism; N-acetylneuraminate degradation; D-fructose 6-phosphate from N-acetylneuraminate: step 5/5. Its activity is regulated as follows. Allosterically activated by N-acetylglucosamine 6-phosphate (GlcNAc6P). Its function is as follows. Catalyzes the reversible isomerization-deamination of glucosamine 6-phosphate (GlcN6P) to form fructose 6-phosphate (Fru6P) and ammonium ion. This Mannheimia succiniciproducens (strain KCTC 0769BP / MBEL55E) protein is Glucosamine-6-phosphate deaminase.